The following is a 58-amino-acid chain: Small ribosomal subunit protein bS21 (58 aa).

The disordered stretch occupies residues 37–58 (FYEKPSVKRKRKSEAARKRKKF). Basic residues predominate over residues 43–58 (VKRKRKSEAARKRKKF).

The protein belongs to the bacterial ribosomal protein bS21 family.

The sequence is that of Small ribosomal subunit protein bS21 from Streptococcus sanguinis (strain SK36).